The chain runs to 115 residues: Viral Lymphotactin (115 aa).

Positions 1–19 (MRLLTILALCCVAIWVVES) are cleaved as a signal peptide. Cys30 and Cys67 are oxidised to a cystine.

This sequence belongs to the intercrine gamma family. As to quaternary structure, interacts with host XCR1. N-glycosylated and O-glycosylated.

Its subcellular location is the secreted. In terms of biological role, chemoattractant for CD4-dendritic cells, but not for CD4+ dendritic cells, T-cells or B-cells. The chain is Viral Lymphotactin (vXCL1) from Rat cytomegalovirus (isolate England) (RCMV-E).